The following is a 166-amino-acid chain: Small ribosomal subunit protein uS5 (166 aa).

The S5 DRBM domain maps to 11–74 (LNEKLIAVNR…EKARRNMFTI (64 aa)).

It belongs to the universal ribosomal protein uS5 family. Part of the 30S ribosomal subunit. Contacts proteins S4 and S8.

Functionally, with S4 and S12 plays an important role in translational accuracy. Located at the back of the 30S subunit body where it stabilizes the conformation of the head with respect to the body. This Aliivibrio fischeri (strain ATCC 700601 / ES114) (Vibrio fischeri) protein is Small ribosomal subunit protein uS5.